Here is a 321-residue protein sequence, read N- to C-terminus: Biotin synthase (321 aa).

Positions 45-271 (FFGKKVKLNM…INPSKEIRIA (227 aa)) constitute a Radical SAM core domain. The [4Fe-4S] cluster site is built by C63, C67, and C70. Positions 106, 139, 199, and 269 each coordinate [2Fe-2S] cluster.

This sequence belongs to the radical SAM superfamily. Biotin synthase family. As to quaternary structure, homodimer. The cofactor is [4Fe-4S] cluster. Requires [2Fe-2S] cluster as cofactor.

The catalysed reaction is (4R,5S)-dethiobiotin + (sulfur carrier)-SH + 2 reduced [2Fe-2S]-[ferredoxin] + 2 S-adenosyl-L-methionine = (sulfur carrier)-H + biotin + 2 5'-deoxyadenosine + 2 L-methionine + 2 oxidized [2Fe-2S]-[ferredoxin]. The protein operates within cofactor biosynthesis; biotin biosynthesis; biotin from 7,8-diaminononanoate: step 2/2. Catalyzes the conversion of dethiobiotin (DTB) to biotin by the insertion of a sulfur atom into dethiobiotin via a radical-based mechanism. This Staphylococcus haemolyticus (strain JCSC1435) protein is Biotin synthase.